Reading from the N-terminus, the 218-residue chain is Protein GrpE (218 aa).

Polar residues predominate over residues 1-10; sequence MSGEASTPAQ. Disordered regions lie at residues 1 to 44 and 198 to 218; these read MSGE…DPAE and SMGPGPSADAEGAASAEAEDS. Positions 200-218 are enriched in low complexity; that stretch reads GPGPSADAEGAASAEAEDS.

It belongs to the GrpE family. In terms of assembly, homodimer.

The protein localises to the cytoplasm. Participates actively in the response to hyperosmotic and heat shock by preventing the aggregation of stress-denatured proteins, in association with DnaK and GrpE. It is the nucleotide exchange factor for DnaK and may function as a thermosensor. Unfolded proteins bind initially to DnaJ; upon interaction with the DnaJ-bound protein, DnaK hydrolyzes its bound ATP, resulting in the formation of a stable complex. GrpE releases ADP from DnaK; ATP binding to DnaK triggers the release of the substrate protein, thus completing the reaction cycle. Several rounds of ATP-dependent interactions between DnaJ, DnaK and GrpE are required for fully efficient folding. This chain is Protein GrpE, found in Parasynechococcus marenigrum (strain WH8102).